Reading from the N-terminus, the 87-residue chain is Small ribosomal subunit protein bS18 (87 aa).

It belongs to the bacterial ribosomal protein bS18 family. In terms of assembly, part of the 30S ribosomal subunit. Forms a tight heterodimer with protein bS6.

Its function is as follows. Binds as a heterodimer with protein bS6 to the central domain of the 16S rRNA, where it helps stabilize the platform of the 30S subunit. In Oleidesulfovibrio alaskensis (strain ATCC BAA-1058 / DSM 17464 / G20) (Desulfovibrio alaskensis), this protein is Small ribosomal subunit protein bS18.